The primary structure comprises 376 residues: PqqA peptide cyclase (376 aa).

The Radical SAM core domain occupies 4 to 219; sequence VPPPLSVLLE…VETARRSLGD (216 aa). [4Fe-4S] cluster contacts are provided by C18, C22, and C25.

Belongs to the radical SAM superfamily. PqqE family. In terms of assembly, interacts with PqqD. The interaction is necessary for activity of PqqE. Requires [4Fe-4S] cluster as cofactor.

It carries out the reaction [PQQ precursor protein] + S-adenosyl-L-methionine = E-Y cross-linked-[PQQ precursor protein] + 5'-deoxyadenosine + L-methionine + H(+). It functions in the pathway cofactor biosynthesis; pyrroloquinoline quinone biosynthesis. Catalyzes the cross-linking of a glutamate residue and a tyrosine residue in the PqqA protein as part of the biosynthesis of pyrroloquinoline quinone (PQQ). The polypeptide is PqqA peptide cyclase (Xanthomonas campestris pv. campestris (strain 8004)).